We begin with the raw amino-acid sequence, 276 residues long: NADPH-dependent 7-cyano-7-deazaguanine reductase (276 aa).

A substrate-binding site is contributed by 80–82 (IES). 82 to 83 (SK) serves as a coordination point for NADPH. Cys-178 (thioimide intermediate) is an active-site residue. The Proton donor role is filled by Asp-185. Position 217-218 (217-218 (HE)) interacts with substrate. 246–247 (RG) is a binding site for NADPH.

Belongs to the GTP cyclohydrolase I family. QueF type 2 subfamily. Homodimer.

The protein localises to the cytoplasm. It carries out the reaction 7-aminomethyl-7-carbaguanine + 2 NADP(+) = 7-cyano-7-deazaguanine + 2 NADPH + 3 H(+). It functions in the pathway tRNA modification; tRNA-queuosine biosynthesis. In terms of biological role, catalyzes the NADPH-dependent reduction of 7-cyano-7-deazaguanine (preQ0) to 7-aminomethyl-7-deazaguanine (preQ1). The sequence is that of NADPH-dependent 7-cyano-7-deazaguanine reductase from Teredinibacter turnerae (strain ATCC 39867 / T7901).